The following is a 215-amino-acid chain: Octanoyltransferase (215 aa).

The region spanning 31 to 206 is the BPL/LPL catalytic domain; sequence TTAPDEIWLV…QLVKHLDYAE (176 aa). Substrate contacts are provided by residues 70 to 77, 137 to 139, and 150 to 152; these read RGGQVTYH, SLG, and GLA. Cysteine 168 serves as the catalytic Acyl-thioester intermediate.

Belongs to the LipB family.

The protein resides in the cytoplasm. It catalyses the reaction octanoyl-[ACP] + L-lysyl-[protein] = N(6)-octanoyl-L-lysyl-[protein] + holo-[ACP] + H(+). The protein operates within protein modification; protein lipoylation via endogenous pathway; protein N(6)-(lipoyl)lysine from octanoyl-[acyl-carrier-protein]: step 1/2. Functionally, catalyzes the transfer of endogenously produced octanoic acid from octanoyl-acyl-carrier-protein onto the lipoyl domains of lipoate-dependent enzymes. Lipoyl-ACP can also act as a substrate although octanoyl-ACP is likely to be the physiological substrate. This Pseudomonas fluorescens (strain Pf0-1) protein is Octanoyltransferase.